Reading from the N-terminus, the 293-residue chain is 4-diphosphocytidyl-2-C-methyl-D-erythritol kinase (293 aa).

Lysine 16 is a catalytic residue. 99 to 109 (PMGAGLGGGSS) is an ATP binding site. Aspartate 141 is a catalytic residue.

Belongs to the GHMP kinase family. IspE subfamily.

It carries out the reaction 4-CDP-2-C-methyl-D-erythritol + ATP = 4-CDP-2-C-methyl-D-erythritol 2-phosphate + ADP + H(+). Its pathway is isoprenoid biosynthesis; isopentenyl diphosphate biosynthesis via DXP pathway; isopentenyl diphosphate from 1-deoxy-D-xylulose 5-phosphate: step 3/6. Functionally, catalyzes the phosphorylation of the position 2 hydroxy group of 4-diphosphocytidyl-2C-methyl-D-erythritol. The polypeptide is 4-diphosphocytidyl-2-C-methyl-D-erythritol kinase (Paraburkholderia phytofirmans (strain DSM 17436 / LMG 22146 / PsJN) (Burkholderia phytofirmans)).